The primary structure comprises 157 residues: Small ribosomal subunit protein uS7cz/uS7cy (157 aa).

This sequence belongs to the universal ribosomal protein uS7 family. As to quaternary structure, part of the 30S ribosomal subunit.

The protein resides in the plastid. Its subcellular location is the chloroplast. One of the primary rRNA binding proteins, it binds directly to 16S rRNA where it nucleates assembly of the head domain of the 30S subunit. The polypeptide is Small ribosomal subunit protein uS7cz/uS7cy (rps7-A) (Gnetum parvifolium (Small-leaved jointfir)).